The following is a 76-amino-acid chain: Small ribosomal subunit protein bS18 (76 aa).

Belongs to the bacterial ribosomal protein bS18 family. In terms of assembly, part of the 30S ribosomal subunit. Forms a tight heterodimer with protein bS6.

In terms of biological role, binds as a heterodimer with protein bS6 to the central domain of the 16S rRNA, where it helps stabilize the platform of the 30S subunit. This Nitrosomonas europaea (strain ATCC 19718 / CIP 103999 / KCTC 2705 / NBRC 14298) protein is Small ribosomal subunit protein bS18.